A 330-amino-acid polypeptide reads, in one-letter code: Putative [LysW]-L-2-aminoadipate/[LysW]-L-glutamate phosphate reductase (330 aa).

NADP(+) contacts are provided by residues 10–13 (SGYI) and 34–36 (SRR). C142 is a catalytic residue. N297 is an NADP(+) binding site.

It belongs to the NAGSA dehydrogenase family. Type 1 subfamily. LysY sub-subfamily.

It is found in the cytoplasm. The enzyme catalyses [amino-group carrier protein]-C-terminal-N-(1-carboxy-5-oxopentan-1-yl)-L-glutamine + phosphate + NADP(+) = [amino-group carrier protein]-C-terminal-N-(1-carboxy-5-phosphooxy-5-oxopentan-1-yl)-L-glutamine + NADPH + H(+). It catalyses the reaction [amino-group carrier protein]-C-terminal-gamma-(L-glutamyl-5-semialdehyde)-L-glutamate + phosphate + NADP(+) = [amino-group carrier protein]-C-terminal-gamma-(5-phospho-L-glutamyl)-L-glutamate + NADPH + H(+). Its pathway is amino-acid biosynthesis; L-lysine biosynthesis via AAA pathway; L-lysine from L-alpha-aminoadipate (Thermus route): step 3/5. It participates in amino-acid biosynthesis; L-arginine biosynthesis. Its function is as follows. Involved in both the arginine and lysine biosynthetic pathways. This chain is Putative [LysW]-L-2-aminoadipate/[LysW]-L-glutamate phosphate reductase, found in Thermococcus kodakarensis (strain ATCC BAA-918 / JCM 12380 / KOD1) (Pyrococcus kodakaraensis (strain KOD1)).